Reading from the N-terminus, the 308-residue chain is Cytochrome c biogenesis protein CcsA (308 aa).

The next 7 membrane-spanning stretches (helical) occupy residues 2–22 (IVST…SILI), 44–64 (GMLI…IYLG), 71–91 (LSES…IGYF), 143–163 (MILG…LMVI), 212–232 (VISL…VWAN), 247–267 (WAFI…NINL), and 273–293 (AIVA…VNLV).

Belongs to the CcmF/CycK/Ccl1/NrfE/CcsA family. In terms of assembly, may interact with Ccs1.

The protein resides in the plastid membrane. Functionally, required during biogenesis of c-type cytochromes (cytochrome c6 and cytochrome f) at the step of heme attachment. The chain is Cytochrome c biogenesis protein CcsA from Cuscuta reflexa (Southern Asian dodder).